A 211-amino-acid chain; its full sequence is Uracil phosphoribosyltransferase (211 aa).

5-phospho-alpha-D-ribose 1-diphosphate-binding positions include arginine 78, arginine 103, and 130–138 (DPMLATGGT). Uracil-binding positions include isoleucine 195 and 200 to 202 (GDA). Aspartate 201 is a binding site for 5-phospho-alpha-D-ribose 1-diphosphate.

Belongs to the UPRTase family. Mg(2+) serves as cofactor.

It carries out the reaction UMP + diphosphate = 5-phospho-alpha-D-ribose 1-diphosphate + uracil. It participates in pyrimidine metabolism; UMP biosynthesis via salvage pathway; UMP from uracil: step 1/1. With respect to regulation, allosterically activated by GTP. Functionally, catalyzes the conversion of uracil and 5-phospho-alpha-D-ribose 1-diphosphate (PRPP) to UMP and diphosphate. In Kocuria rhizophila (strain ATCC 9341 / DSM 348 / NBRC 103217 / DC2201), this protein is Uracil phosphoribosyltransferase.